We begin with the raw amino-acid sequence, 1214 residues long: Neuronal cell adhesion molecule (1214 aa).

Residues 1–29 form the signal peptide; it reads MQLKTMPKKKPLSAGRAPLFLFLCQMISA. Residues 30-1077 lie on the Extracellular side of the membrane; that stretch reads LDVPLDPKLL…ASRQVDIATQ (1048 aa). Ig-like C2-type domains are found at residues 46-134 and 141-235; these read PTIT…AAVS and PSRS…QPIS. Disulfide bonds link C68–C123 and C167–C218. N83 carries an N-linked (GlcNAc...) asparagine glycan. N-linked (GlcNAc...) asparagine glycans are attached at residues N223, N245, N251, N276, N314, and N377. Ig-like C2-type domains lie at 267–356, 361–448, 454–541, and 545–626; these read PPTF…ISVT, PYWI…AFVN, PRIL…VHLE, and PTRF…DSVS. C292 and C340 are disulfide-bonded. C382 and C432 are joined by a disulfide. N-linked (GlcNAc...) asparagine glycans are attached at residues N433 and N507. 2 disulfide bridges follow: C476–C525 and C567–C616. N-linked (GlcNAc...) asparagine glycosylation is found at N619, N716, N802, N858, N993, N1009, and N1019. Fibronectin type-III domains lie at 649-744, 746-843, 848-950, and 954-1051; these read PPFD…TKAA, PDQN…SGED, APGN…TPEG, and APSS…VDEG. The helical transmembrane segment at 1078–1100 threads the bilayer; sequence GWFIGLMCAVALLILILLIVCFI. The Cytoplasmic portion of the chain corresponds to 1101–1214; the sequence is RRNKGGKYPV…SPVNAMNSFV (114 aa). Residues 1109-1129 are compositionally biased toward basic and acidic residues; sequence PVKEKEDAHADPEIQPMKEDD. The segment at 1109-1214 is disordered; that stretch reads PVKEKEDAHA…SPVNAMNSFV (106 aa). Residue T1131 is modified to Phosphothreonine. Y1135 is subject to Phosphotyrosine. A Phosphoserine modification is found at S1136. A compositionally biased stretch (basic and acidic residues) spans 1151–1160; it reads PSDRTVKKED. Phosphoserine is present on residues S1161, S1164, S1181, S1200, S1201, and S1205. Residues 1198 to 1214 are compositionally biased toward polar residues; the sequence is NESSEAPSPVNAMNSFV.

The protein belongs to the immunoglobulin superfamily. L1/neurofascin/NgCAM family. In terms of assembly, constituent of a NFASC/NRCAM/ankyrin-G complex. Detected in a complex with CNTN1 and PTPRB. Interacts with MYOC. Interacts with GLDN. Detected in cerebellum Purkinje cells. Detected on nodes of Ranvier and unmyelinated axons in sciatic nerve (at protein level).

The protein resides in the cell membrane. It is found in the cell projection. The protein localises to the axon. It localises to the secreted. Its function is as follows. Cell adhesion protein that is required for normal responses to cell-cell contacts in brain and in the peripheral nervous system. Plays a role in neurite outgrowth in response to contactin binding. Plays a role in mediating cell-cell contacts between Schwann cells and axons. Plays a role in the formation and maintenance of the nodes of Ranvier on myelinated axons. Nodes of Ranvier contain clustered sodium channels that are crucial for the saltatory propagation of action potentials along myelinated axons. During development, nodes of Ranvier are formed by the fusion of two heminodes. Required for normal clustering of sodium channels at heminodes; not required for the formation of mature nodes with normal sodium channel clusters. Required, together with GLDN, for maintaining NFASC and sodium channel clusters at mature nodes of Ranvier. This is Neuronal cell adhesion molecule (Nrcam) from Rattus norvegicus (Rat).